The following is a 153-amino-acid chain: Aspartate carbamoyltransferase regulatory chain (153 aa).

Residues Cys109, Cys114, Cys138, and Cys141 each contribute to the Zn(2+) site.

Belongs to the PyrI family. In terms of assembly, contains catalytic and regulatory chains. Zn(2+) is required as a cofactor.

Functionally, involved in allosteric regulation of aspartate carbamoyltransferase. The sequence is that of Aspartate carbamoyltransferase regulatory chain from Cronobacter sakazakii (strain ATCC BAA-894) (Enterobacter sakazakii).